The primary structure comprises 176 residues: Peptide deformylase 1 (176 aa).

2 residues coordinate Fe cation: Cys-99 and His-141. Glu-142 is a catalytic residue. Residue His-145 coordinates Fe cation.

This sequence belongs to the polypeptide deformylase family. It depends on Fe(2+) as a cofactor.

It catalyses the reaction N-terminal N-formyl-L-methionyl-[peptide] + H2O = N-terminal L-methionyl-[peptide] + formate. Its function is as follows. Removes the formyl group from the N-terminal Met of newly synthesized proteins. Requires at least a dipeptide for an efficient rate of reaction. N-terminal L-methionine is a prerequisite for activity but the enzyme has broad specificity at other positions. The sequence is that of Peptide deformylase 1 from Bordetella pertussis (strain Tohama I / ATCC BAA-589 / NCTC 13251).